A 360-amino-acid chain; its full sequence is sn-glycerol-3-phosphate import ATP-binding protein UgpC (360 aa).

Residues L4–I235 enclose the ABC transporter domain. An ATP-binding site is contributed by G37 to S44.

It belongs to the ABC transporter superfamily. sn-glycerol-3-phosphate importer (TC 3.A.1.1.3) family. In terms of assembly, the complex is composed of two ATP-binding proteins (UgpC), two transmembrane proteins (UgpA and UgpE) and a solute-binding protein (UgpB).

Its subcellular location is the cell inner membrane. It carries out the reaction sn-glycerol 3-phosphate(out) + ATP + H2O = sn-glycerol 3-phosphate(in) + ADP + phosphate + H(+). In terms of biological role, part of the ABC transporter complex UgpBAEC involved in sn-glycerol-3-phosphate (G3P) import. Responsible for energy coupling to the transport system. The sequence is that of sn-glycerol-3-phosphate import ATP-binding protein UgpC from Burkholderia thailandensis (strain ATCC 700388 / DSM 13276 / CCUG 48851 / CIP 106301 / E264).